The sequence spans 1408 residues: MEIEIYDELNSSDSLKQINGLSKLNQFWINQGRDPTLFFTSIIKLISETDNKTTRILCYSILKSCKCTPSDWSLAIPLLVKDLNSDDNEVVISILKTLPHISSIFTELLMMGNADFGPLVRHGNPSVRKTALDTLTSLLFYRKSILQSYKSFVSTGWELIVDRILEEPIPMVYQSSFSAISSLFSEISRSVSHSDELDNSVQKRQVLSYYADWISLKLIDHFDLLLNRAQHIDINQRHSTVNTLTYLVDTISRSSGTPFWPTSFDNNNNNNNNQQINNNNNNNNNNNNNNNNNNNNNNNNNNNNNQNNLINGISSMNLSSITGTTTTTTTTGNSPITSPTSPTSIIANTASSNKTKQISSPQNIVSILVEYFLSQLDSSNDSLVFAVGKAILDLLLTQQNQHNENWINPVLTAFIGLLRREGVSLNPLPILLAIMSVLPMLGDDLLFCTLSRIFPSIKSITDSNQRVSYLIRTFELIIDRHVTSSGKSSLFTPLMTTDCLLMAFQDESSSFREEIIVSMVASHHNILSKYIEIESEKNSNNNNSSSGNSGGGSGGSVKFSTSGNLFYLHQAALNISEVCLKCITWQSERISAIEYCIRFVDWLCRVTLSSSSSSNNSGNGSESQYGIKLISLLRSDLLDQINKIPSDYICLQAVFLICTHLLRSPTNKVYEQSDAGLLISLLRRRFLFLDNQPKFTQYNGNIRDMIMGVSQFGRVSPASLHSLSGYWLGALECLYLMGLHIPSVEATVQRTLEEILATYPHNKSVYSRARFIRRMLFSSTSSALDAQSLGKYSTIRNLNSFTNYTIDFSYCIPIEQLEASNSLHSISDIFAYECKKAITGLVGVHYGSSIRDKSSRDVTLISGASDPVWIEVSHTTHPTLNTITLHVQVTNVIHFSIKNVNIMIGLSGHLDFPYPQTNCKHNIPKLLPEKSYSFEVPLNVSSLDYNLVTFKLTFNQPSGLCESENNINLNNIHTKINNYQQSSDQLLVQSIQQQQQQQQSSSQQQSQQSQQQQYQPQPISSVNSGLSSYSLNSNNSGSLNSSANSHSISTSAVGSPGTASFISSSLLSNAQSSSPTTSSPLSNVINQNIISSSSSSSSNANQITSTTTPSSTTNSNNNTTSSSSSTNPNPNPNSHTNLNSIVGSGINQPIINNQIIQSLSITTNNPSANIIQFSPIEIRCSDYIFDWNQFLIPFKYNKHQFIQQWPRFEAVFSIDVVFEGFVSVASIFDCLSALPLHNVLNSEFGNSNFHFAFSSSTWFNEQFCFTISGMEKCLSFPEDYSIYYTSPNGQSLPKYKVYHARFEFRSSSSSLLASFESIIDQWINKLPRPTSDQFIARLLAPDEKSLFSITNITQDYQAPKNHQSLANTPLSNIVDDEIALLNQWKDFKKSQEQTKKLFSQLALDQDFY.

Disordered regions lie at residues Phe259–Ala347, Gln998–Ser1055, and Ser1091–Asn1139. Over residues Asn266 to Asn308 the composition is skewed to low complexity. Positions Leu309–Leu318 are enriched in polar residues. Composition is skewed to low complexity over residues Ser319 to Ala347 and Gln998 to Ser1051.

Belongs to the TPLATE family. In terms of assembly, component of the TSET complex, a heterohexamer composed of tstA, tstB, tstC, tstD, tstE and tstF, which may act in plasma membrane turnover. tstA, tstB, tstC and tstD are likely to be the core complex members with tstE and tstF acting as associated scaffold proteins.

The chain is TSET complex member tstA from Dictyostelium discoideum (Social amoeba).